We begin with the raw amino-acid sequence, 230 residues long: MGQQISSQTQTVMNKLPEKVAKHASLVQESGFLTYEEFLGRVAELNDVTAKLASGQEKHLLFEVQPGSDSSAFWKVVVRIICTKINKTSGIVEASRILNLYQFVQLYKDITSQAAGVLAQSETSEEAAESLTSVSSSQASLWMGRLKQPTDEDECCICMDGRVDLILPCAHSFCQKCIDKWSDRHRSCPVCRRQVTGAGDSWVVSDAPTEDDIATYILNMVDEVGQPLRP.

Residues 154-191 (ECCICMDGRVDLILPCAHSFCQKCIDKWSDRHRSCPVC) form an RING-type zinc finger.

The protein is RING finger protein 141 (RNF141) of Gallus gallus (Chicken).